We begin with the raw amino-acid sequence, 117 residues long: Membrane-anchored ubiquitin-fold protein 1 (117 aa).

A Ubiquitin-like domain is found at 8–74 (LEIKFRLTDG…LENSKTVKDY (67 aa)). Cysteine 112 carries S-palmitoyl cysteine lipidation. Cysteine 114 bears the Cysteine methyl ester mark. Cysteine 114 carries the S-farnesyl cysteine lipid modification. A propeptide spans 115-117 (SVM) (removed in mature form).

The protein localises to the cell membrane. Its function is as follows. May serve as docking site to facilitate the association of other proteins to the plasma membrane. This chain is Membrane-anchored ubiquitin-fold protein 1 (MUB1), found in Arabidopsis thaliana (Mouse-ear cress).